We begin with the raw amino-acid sequence, 583 residues long: Membrane-bound O-acyltransferase gup1 (583 aa).

At Met1–Ser52 the chain is on the extracellular side. The tract at residues Lys15–Leu42 is disordered. The segment covering Ser22–Ser40 has biased composition (low complexity). A helical membrane pass occupies residues Ala53 to Ala73. Over Cys74–Met119 the chain is Cytoplasmic. Residues Pro120–Phe140 traverse the membrane as a helical segment. Topologically, residues Thr141–Ser159 are extracellular. Residues Leu160 to Ile180 traverse the membrane as a helical segment. Over Asn181 to Ser191 the chain is Cytoplasmic. A helical membrane pass occupies residues Ile192–Phe212. At Ala213 to Lys298 the chain is on the extracellular side. The helical transmembrane segment at Asn299–Asn319 threads the bilayer. Topologically, residues Asn320–Arg343 are cytoplasmic. The helical transmembrane segment at Phe344–Ser364 threads the bilayer. The Extracellular portion of the chain corresponds to Lys365–Ser373. The helical transmembrane segment at Ala374–Ile394 threads the bilayer. The Cytoplasmic portion of the chain corresponds to Pro395–Tyr444. The next 2 helical transmembrane spans lie at Val445 to Ala465 and Leu466 to Leu486. The active site involves His468. The Cytoplasmic portion of the chain corresponds to Pro487 to Phe512. The chain crosses the membrane as a helical span at residues Gly513–Ile533. Topologically, residues Asp534 to Gly549 are extracellular. A helical membrane pass occupies residues Ala550–Ile570. Over Arg571–Cys583 the chain is Cytoplasmic.

It belongs to the membrane-bound acyltransferase family.

It is found in the cell membrane. The protein localises to the endoplasmic reticulum membrane. The protein resides in the mitochondrion membrane. In terms of biological role, membrane-bound O-acyltransferase involved in the remodeling of glycosylphosphatidylinositol (GPI) anchors. Acts only on GPI-anchored proteins, but not on free GPI lipids. Also involved in lipid metabolism, having profound effects on sphingolipid-sterol-ordered domains integrity and assembly. Involved in cell integrity and apoptosis. The polypeptide is Membrane-bound O-acyltransferase gup1 (gup1) (Schizosaccharomyces pombe (strain 972 / ATCC 24843) (Fission yeast)).